The chain runs to 826 residues: Leucine--tRNA ligase (826 aa).

Residues 42–52 (PYPSGNLHMGH) carry the 'HIGH' region motif. A 'KMSKS' region motif is present at residues 581-585 (KMSKS). ATP is bound at residue Lys584.

Belongs to the class-I aminoacyl-tRNA synthetase family.

Its subcellular location is the cytoplasm. It carries out the reaction tRNA(Leu) + L-leucine + ATP = L-leucyl-tRNA(Leu) + AMP + diphosphate. The chain is Leucine--tRNA ligase from Desulforudis audaxviator (strain MP104C).